Reading from the N-terminus, the 213-residue chain is uncharacterized protein (213 aa).

This is an uncharacterized protein from Saccharomyces cerevisiae (strain ATCC 204508 / S288c) (Baker's yeast).